We begin with the raw amino-acid sequence, 89 residues long: Small ribosomal subunit protein uS14A (89 aa).

It belongs to the universal ribosomal protein uS14 family. In terms of assembly, part of the 30S ribosomal subunit. Contacts proteins S3 and S10.

In terms of biological role, binds 16S rRNA, required for the assembly of 30S particles and may also be responsible for determining the conformation of the 16S rRNA at the A site. The polypeptide is Small ribosomal subunit protein uS14A (Levilactobacillus brevis (strain ATCC 367 / BCRC 12310 / CIP 105137 / JCM 1170 / LMG 11437 / NCIMB 947 / NCTC 947) (Lactobacillus brevis)).